A 333-amino-acid polypeptide reads, in one-letter code: MYLVAFMLLAILPTGYCQLNTLAVRAGKKYFGTATDNPELGDAPYVAQLGNTADFNQITAGNSMKWDATEPSRGTFTFSNGDTVANMARNRGQLLRGHTCVWHSQLPNWVTSGNFDNSTLLSIVQNHCSTLVSHYRGQMYSWDVVNEPFNEDGSFRQSVFFQKTGTAYIATALRAARNADPNTKLYINDFNIEGTGAKSTGMINLVRSLQQQNVPIDGIGVQAHLIVGQIPSSIQQNLQNFANLGVEVAITELDIRMTLPVTQQKLEQQQEDYRTVIRACKAVSRCVGVTVWDWTDRYSWVPGVFNGEGAACPWDENLAKKPAYQGIVDGWSQ.

The first 17 residues, Met-1–Cys-17, serve as a signal peptide directing secretion. The GH10 domain occupies Gln-18–Gly-330. Glu-147 serves as the catalytic Proton donor. Glu-252 (nucleophile) is an active-site residue.

The protein belongs to the glycosyl hydrolase 10 (cellulase F) family.

Its subcellular location is the secreted. The enzyme catalyses Endohydrolysis of (1-&gt;4)-beta-D-xylosidic linkages in xylans.. It participates in glycan degradation; xylan degradation. Functionally, has xylanase activity. Seems to be involved in the release of sugars from the hemicellulolytic fraction in the compost. This chain is Endo-1,4-beta-xylanase (xlnA), found in Agaricus bisporus (White button mushroom).